The following is a 231-amino-acid chain: NADH-ubiquinone oxidoreductase chain 4 (231 aa).

6 helical membrane-spanning segments follow: residues Pro-1–Ile-21, Met-34–Leu-54, Ile-63–Gly-85, Ala-89–Tyr-111, Ile-128–Pro-148, and Phe-156–Ser-176.

This sequence belongs to the complex I subunit 4 family.

It localises to the mitochondrion membrane. The enzyme catalyses a ubiquinone + NADH + 5 H(+)(in) = a ubiquinol + NAD(+) + 4 H(+)(out). Functionally, core subunit of the mitochondrial membrane respiratory chain NADH dehydrogenase (Complex I) that is believed to belong to the minimal assembly required for catalysis. Complex I functions in the transfer of electrons from NADH to the respiratory chain. The immediate electron acceptor for the enzyme is believed to be ubiquinone. The sequence is that of NADH-ubiquinone oxidoreductase chain 4 (MT-ND4) from Bothriechis schlegelii (Eyelash palm pitviper).